The sequence spans 179 residues: Methylated-DNA--protein-cysteine methyltransferase, inducible (179 aa).

The active-site Nucleophile; methyl group acceptor is the Cys141.

It belongs to the MGMT family.

The catalysed reaction is a 6-O-methyl-2'-deoxyguanosine in DNA + L-cysteinyl-[protein] = S-methyl-L-cysteinyl-[protein] + a 2'-deoxyguanosine in DNA. It catalyses the reaction a 4-O-methyl-thymidine in DNA + L-cysteinyl-[protein] = a thymidine in DNA + S-methyl-L-cysteinyl-[protein]. Involved in the cellular defense against the biological effects of O6-methylguanine (O6-MeG) and O4-methylthymine (O4-MeT) in DNA. Repairs the methylated nucleobase in DNA by stoichiometrically transferring the methyl group to a cysteine residue in the enzyme. This is a suicide reaction: the enzyme is irreversibly inactivated. This is Methylated-DNA--protein-cysteine methyltransferase, inducible (adaB) from Bacillus subtilis (strain 168).